The sequence spans 611 residues: Zinc metalloproteinase-disintegrin-like ohanin (611 aa).

A signal peptide spans 1 to 20 (MIQVLLVTICLVVFPYQGSS). A propeptide spanning residues 21 to 187 (IILESGKVND…WESDEPIEKI (167 aa)) is cleaved from the precursor. The Peptidase M12B domain maps to 198–393 (KYLELYIVAD…DTPQCLINKP (196 aa)). N-linked (GlcNAc...) asparagine glycosylation is found at Asn217 and Asn260. 3 disulfide bridges follow: Cys307-Cys388, Cys347-Cys372, and Cys349-Cys354. His332 serves as a coordination point for Zn(2+). Residue Glu333 is part of the active site. Residues His336 and His342 each coordinate Zn(2+). Asn395 is a glycosylation site (N-linked (GlcNAc...) asparagine). Residues 401–487 (NAVCGNYVEE…ECPMDRFHKN (87 aa)) form the Disintegrin domain. 14 cysteine pairs are disulfide-bonded: Cys404–Cys433, Cys415–Cys428, Cys417–Cys423, Cys427–Cys450, Cys441–Cys447, Cys446–Cys472, Cys459–Cys479, Cys466–Cys498, Cys491–Cys503, Cys510–Cys560, Cys525–Cys578, Cys538–Cys548, Cys555–Cys603, and Cys597–Cys608. A D/ECD-tripeptide motif is present at residues 465 to 467 (ECD). Asn528 carries N-linked (GlcNAc...) asparagine glycosylation.

It belongs to the venom metalloproteinase (M12B) family. P-III subfamily. P-IIIa sub-subfamily. In terms of assembly, monomer. Zn(2+) is required as a cofactor. Expressed by the venom gland.

The protein resides in the secreted. With respect to regulation, inhibited by EDTA, but not by PMSF. In terms of biological role, snake venom zinc metalloproteinase that has hemorrhagic activity. Inhibits ADP-, TMVA- and stejnulxin-induced platelet aggregation in a dose-dependent manner (on washed platelet, but not on platelet rich plasm). Also specifically degrades alpha-chain of fibrinogen (FGA). In Ophiophagus hannah (King cobra), this protein is Zinc metalloproteinase-disintegrin-like ohanin.